Consider the following 468-residue polypeptide: 3-isopropylmalate dehydratase large subunit (468 aa).

Residues Cys-347, Cys-407, and Cys-410 each coordinate [4Fe-4S] cluster.

It belongs to the aconitase/IPM isomerase family. LeuC type 1 subfamily. Heterodimer of LeuC and LeuD. [4Fe-4S] cluster serves as cofactor.

It carries out the reaction (2R,3S)-3-isopropylmalate = (2S)-2-isopropylmalate. It functions in the pathway amino-acid biosynthesis; L-leucine biosynthesis; L-leucine from 3-methyl-2-oxobutanoate: step 2/4. Functionally, catalyzes the isomerization between 2-isopropylmalate and 3-isopropylmalate, via the formation of 2-isopropylmaleate. This is 3-isopropylmalate dehydratase large subunit from Campylobacter jejuni subsp. jejuni serotype O:6 (strain 81116 / NCTC 11828).